A 439-amino-acid chain; its full sequence is MQITIAIQDTTGDDQDFLSLQVFPDMTLETLRNSIQAETSHHPSTQHLYHNGNLITDNSKTLTQLNVTDGDMLALHVRETQRATAVPESQQGRPAAPPQQDPEFLRLQFLANPALRAEVERTAPDLAAAINDPQRWAQLFRERYDREQRERAERHRIIQQLNEDPFNPEAQARIEEIIRQERVTENLQTAMEHNPEVFGTVHMLYLDVEVNGAKVKALVDSGAQATIMSPDIAEACGIMRLVDKRYGGIAKGVGTAKIIGRVHTAPVKIGSLFLPCSFTVMEGKNVDMLLGLDMLKRYQACIDLAKNALVIQGEEIPFLGEADIPKATEEALQDEPTIEGPGGTTIGQRTGAVSGPGTAQHRQGQAGPSTAAQPGPSAPAPAPASASAPAPRAPQARSFPREHIEQLVALGADEQKAIRALEATDGNVEYAASLIFEGF.

Positions 1–82 constitute a Ubiquitin-like domain; that stretch reads MQITIAIQDT…LALHVRETQR (82 aa). Residues 82–101 are disordered; the sequence is RATAVPESQQGRPAAPPQQD. Residue aspartate 220 is part of the active site. The disordered stretch occupies residues 333–398; it reads QDEPTIEGPG…PAPRAPQARS (66 aa). Low complexity-rich tracts occupy residues 364–375 and 383–398; these read GQAGPSTAAQPG and PASA…QARS. Residues 398–438 enclose the UBA domain; sequence SFPREHIEQLVALGADEQKAIRALEATDGNVEYAASLIFEG.

The protein belongs to the DDI1 family. Binds ubiquitin and polyubiquitinated proteins.

The protein localises to the cytoplasm. Functionally, probable aspartic protease. May be involved in the regulation of exocytosis. Acts as a linker between the 19S proteasome and polyubiquitinated proteins via UBA domain interactions with ubiquitin for their subsequent degradation. Required for S-phase checkpoint control. This chain is DNA damage-inducible protein 1 (ddi-1), found in Neurospora crassa (strain ATCC 24698 / 74-OR23-1A / CBS 708.71 / DSM 1257 / FGSC 987).